The primary structure comprises 263 residues: Putative inactive caspase B (263 aa).

Positions 1 to 8 (MMCEDASD) are cleaved as a propeptide — removed in mature form by cps-1 or ced-3.

It belongs to the peptidase C14A family. In terms of assembly, interacts with ced-3 (via large subunit p17 or small subunit p13); the interaction inhibits ced-3 autoactivation. In terms of processing, cleavage by csp-1 isoform b or ced-3 removes the propeptide and generates subunit p31 in vitro. An additional cleavage at Asp-149 generates the 2 subunits p17 and p14 but this cleavage appears to be less efficient. Specifically expressed in the hermaphrodite germline.

It is found in the cytoplasm. Putative inactive caspase. In the germline, binds caspase ced-3 zymogen and prevents ced-3 autoactivation. Does not affect the caspase activity of mature ced-3 and ced-4-mediated mature ced-3 activation. Negatively regulates germline apoptosis by inhibiting autocleavage of caspase ced-3. Involved in fertility. Functionally, putative inactive caspase. Dispensable for the inhibition of germline apoptosis. The polypeptide is Putative inactive caspase B (Caenorhabditis elegans).